Here is a 277-residue protein sequence, read N- to C-terminus: Phosphatidylglycerol--prolipoprotein diacylglyceryl transferase (277 aa).

4 consecutive transmembrane segments (helical) span residues 18 to 38 (ISVKWYGVIIASAVVIALLLA), 51 to 71 (IIVDLLIWAIPISIISARIYY), 89 to 109 (IWHGGIAIYGALIGAVLTAII), and 116 to 136 (ISFWQLADVVAPSLIIAQAIG). R137 provides a ligand contact to a 1,2-diacyl-sn-glycero-3-phospho-(1'-sn-glycerol). The next 3 helical transmembrane spans lie at 177-197 (QPTFLYESLWNVLGFVILLII), 205-225 (GELFLGYVIWYSFGRFFIEGM), and 235-255 (FRVSQALSLLLIVLSIGIIIY).

The protein belongs to the Lgt family.

The protein resides in the cell membrane. It carries out the reaction L-cysteinyl-[prolipoprotein] + a 1,2-diacyl-sn-glycero-3-phospho-(1'-sn-glycerol) = an S-1,2-diacyl-sn-glyceryl-L-cysteinyl-[prolipoprotein] + sn-glycerol 1-phosphate + H(+). It participates in protein modification; lipoprotein biosynthesis (diacylglyceryl transfer). Its function is as follows. Catalyzes the transfer of the diacylglyceryl group from phosphatidylglycerol to the sulfhydryl group of the N-terminal cysteine of a prolipoprotein, the first step in the formation of mature lipoproteins. The polypeptide is Phosphatidylglycerol--prolipoprotein diacylglyceryl transferase (Listeria monocytogenes serovar 1/2a (strain ATCC BAA-679 / EGD-e)).